Here is a 220-residue protein sequence, read N- to C-terminus: 5'(3')-deoxyribonucleotidase, mitochondrial (220 aa).

Residues 1-23 (MHRLRGCCARPRGAPLRAERSRA) constitute a mitochondrion transit peptide. Catalysis depends on Asp33, which acts as the Nucleophile. Positions 33 and 35 each coordinate Mg(2+). The active-site Proton donor is Asp35. Asp35, Phe41, Phe67, Trp68, Val69, Trp88, Thr122, and Lys157 together coordinate substrate. Asp168 provides a ligand contact to Mg(2+).

Belongs to the 5'(3')-deoxyribonucleotidase family. Homodimer. The cofactor is Mg(2+).

It localises to the mitochondrion. Dephosphorylates specifically the 5' and 2'(3')-phosphates of uracil and thymine deoxyribonucleotides, and so protects mitochondrial DNA replication from excess dTTP. Has only marginal activity towards dIMP and dGMP. The polypeptide is 5'(3')-deoxyribonucleotidase, mitochondrial (Nt5m) (Mus musculus (Mouse)).